We begin with the raw amino-acid sequence, 354 residues long: Guanine nucleotide-binding protein G(t) subunit alpha-3 (354 aa).

A disordered region spans residues 1-26 (MGIGISSESKESAKRSKELEKKLQED). A lipid anchor (N-myristoyl glycine) is attached at Gly-2. Positions 8–26 (ESKESAKRSKELEKKLQED) are enriched in basic and acidic residues. One can recognise a G-alpha domain in the interval 32 to 354 (RTVKLLLLGA…KENLKDCGLF (323 aa)). Residues 35 to 48 (KLLLLGAGESGKST) form a G1 motif region. GTP contacts are provided by residues 40–47 (GAGESGKS), 175–181 (LHSRVKT), 200–204 (DVGGQ), 269–272 (NKKD), and Ala-326. 2 residues coordinate Mg(2+): Ser-47 and Thr-181. Residues 173–181 (DVLHSRVKT) are G2 motif. Positions 196–205 (FRMFDVGGQR) are G3 motif. Residues 265 to 272 (VLFLNKKD) form a G4 motif region. The G5 motif stretch occupies residues 324–329 (TCATDT).

It belongs to the G-alpha family. G(i/o/t/z) subfamily. As to quaternary structure, g proteins are composed of 3 units; alpha, beta and gamma, respectively GNAT3, GNB1 and GNG13 for Gustducin heterotrimer for bitter taste transduction. The alpha chain contains the guanine nucleotide binding site. Component of the TAS2R14-GNAT3 complex, consisting of TAS2R14, GNAT3, GNB1 and GNG2; within the complex interacts with TAS2R14; this complex plays a role in the perception of bitterness. Gustducin heterotrimer may also be composed of GNAT3, GNB3 and GNG13. Expressed in epithelial cells of taste buds of the circumvallate, foliate and fungiform. Detected in various region of the respiratory track. Expressed also in spermatozoa.

Its subcellular location is the cytoplasm. Guanine nucleotide-binding protein (G protein) alpha subunit playing a prominent role in bitter and sweet taste transduction as well as in umami (monosodium glutamate, monopotassium glutamate, and inosine monophosphate) taste transduction. The sequence is that of Guanine nucleotide-binding protein G(t) subunit alpha-3 (GNAT3) from Bos taurus (Bovine).